Reading from the N-terminus, the 429-residue chain is Phosphoribosylamine--glycine ligase (429 aa).

The ATP-grasp domain maps to lysine 109–glutamate 316. Position 135–196 (leucine 135–serine 196) interacts with ATP. Residues serine 212–alanine 236 form a disordered region. Basic and acidic residues predominate over residues glutamine 213–threonine 223. Mg(2+)-binding residues include glutamate 286 and asparagine 288.

Belongs to the GARS family. In terms of assembly, monomer. It depends on Mg(2+) as a cofactor. The cofactor is Mn(2+).

It carries out the reaction 5-phospho-beta-D-ribosylamine + glycine + ATP = N(1)-(5-phospho-beta-D-ribosyl)glycinamide + ADP + phosphate + H(+). It functions in the pathway purine metabolism; IMP biosynthesis via de novo pathway; N(1)-(5-phospho-D-ribosyl)glycinamide from 5-phospho-alpha-D-ribose 1-diphosphate: step 2/2. In terms of biological role, catalyzes the reversible conversion of phosphoribosylamine to glycinamide ribonucleotide, an enzymatic step in purine biosynthesis pathway. The protein is Phosphoribosylamine--glycine ligase (purD) of Escherichia coli (strain K12).